Reading from the N-terminus, the 124-residue chain is Small ribosomal subunit protein uS12 (124 aa).

The interval 1 to 32 is disordered; that stretch reads MPTISQLIRHGRQKQKKRTKSPALKSSPQRRG. A compositionally biased stretch (basic residues) spans 9–20; that stretch reads RHGRQKQKKRTK. D89 is modified (3-methylthioaspartic acid).

This sequence belongs to the universal ribosomal protein uS12 family. Part of the 30S ribosomal subunit. Contacts proteins S8 and S17. May interact with IF1 in the 30S initiation complex.

Its function is as follows. With S4 and S5 plays an important role in translational accuracy. In terms of biological role, interacts with and stabilizes bases of the 16S rRNA that are involved in tRNA selection in the A site and with the mRNA backbone. Located at the interface of the 30S and 50S subunits, it traverses the body of the 30S subunit contacting proteins on the other side and probably holding the rRNA structure together. The combined cluster of proteins S8, S12 and S17 appears to hold together the shoulder and platform of the 30S subunit. This chain is Small ribosomal subunit protein uS12, found in Leptospira borgpetersenii serovar Hardjo-bovis (strain JB197).